Consider the following 326-residue polypeptide: Protein ORF5 in retron Ec67 (326 aa).

The disordered stretch occupies residues 1–24 (MGKSKKNRAAATNQLKHKSQTSAE). Positions 10 to 24 (AATNQLKHKSQTSAE) are enriched in polar residues.

The protein belongs to the phage portal family. PBSX subfamily.

The chain is Protein ORF5 in retron Ec67 from Escherichia coli.